We begin with the raw amino-acid sequence, 348 residues long: Anthranilate phosphoribosyltransferase (348 aa).

5-phospho-alpha-D-ribose 1-diphosphate contacts are provided by residues G91, 94 to 95 (GD), T99, 101 to 104 (NIST), 119 to 127 (KHGNRSASG), and S131. Position 91 (G91) interacts with anthranilate. Residue S103 coordinates Mg(2+). N122 is an anthranilate binding site. Position 177 (R177) interacts with anthranilate. 2 residues coordinate Mg(2+): D236 and E237.

Belongs to the anthranilate phosphoribosyltransferase family. Homodimer. Mg(2+) is required as a cofactor.

It carries out the reaction N-(5-phospho-beta-D-ribosyl)anthranilate + diphosphate = 5-phospho-alpha-D-ribose 1-diphosphate + anthranilate. It functions in the pathway amino-acid biosynthesis; L-tryptophan biosynthesis; L-tryptophan from chorismate: step 2/5. Catalyzes the transfer of the phosphoribosyl group of 5-phosphorylribose-1-pyrophosphate (PRPP) to anthranilate to yield N-(5'-phosphoribosyl)-anthranilate (PRA). The polypeptide is Anthranilate phosphoribosyltransferase (Synechococcus sp. (strain ATCC 27144 / PCC 6301 / SAUG 1402/1) (Anacystis nidulans)).